Here is a 234-residue protein sequence, read N- to C-terminus: Exotoxin type G (234 aa).

The first 24 residues, 1–24 (MKTNILTIIILSCVFSYGSQLAYA), serve as a signal peptide directing secretion.

This sequence belongs to the staphylococcal/streptococcal toxin family.

Functionally, mitogenic for human peripheral blood lymphocytes. This is Exotoxin type G (speG) from Streptococcus pyogenes serotype M3 (strain ATCC BAA-595 / MGAS315).